A 142-amino-acid chain; its full sequence is Large ribosomal subunit protein uL13 (142 aa).

This sequence belongs to the universal ribosomal protein uL13 family. In terms of assembly, part of the 50S ribosomal subunit.

This protein is one of the early assembly proteins of the 50S ribosomal subunit, although it is not seen to bind rRNA by itself. It is important during the early stages of 50S assembly. This chain is Large ribosomal subunit protein uL13, found in Halorhodospira halophila (strain DSM 244 / SL1) (Ectothiorhodospira halophila (strain DSM 244 / SL1)).